Consider the following 701-residue polypeptide: DNA ligase (701 aa).

NAD(+) is bound by residues 58–62 (DYEYD), 107–108 (SL), and glutamate 138. Lysine 140 acts as the N6-AMP-lysine intermediate in catalysis. The NAD(+) site is built by arginine 161, glutamate 199, lysine 323, and lysine 347. The Zn(2+) site is built by cysteine 441, cysteine 444, cysteine 459, and cysteine 464. Residues 621–701 (EKRGKLAGLN…EEFLKMIGQQ (81 aa)) enclose the BRCT domain.

Belongs to the NAD-dependent DNA ligase family. LigA subfamily. Mg(2+) is required as a cofactor. Requires Mn(2+) as cofactor.

It carries out the reaction NAD(+) + (deoxyribonucleotide)n-3'-hydroxyl + 5'-phospho-(deoxyribonucleotide)m = (deoxyribonucleotide)n+m + AMP + beta-nicotinamide D-nucleotide.. DNA ligase that catalyzes the formation of phosphodiester linkages between 5'-phosphoryl and 3'-hydroxyl groups in double-stranded DNA using NAD as a coenzyme and as the energy source for the reaction. It is essential for DNA replication and repair of damaged DNA. This chain is DNA ligase, found in Sulfurihydrogenibium azorense (strain DSM 15241 / OCM 825 / Az-Fu1).